A 328-amino-acid chain; its full sequence is 2,3-diketo-L-gulonate-binding periplasmic protein YiaO (328 aa).

The N-terminal stretch at 1-24 is a signal peptide; that stretch reads MKLRSVTYALFIAGLAAFSTSSLA.

As to quaternary structure, the complex comprises the extracytoplasmic solute receptor protein YiaO, and the two transmembrane proteins YiaM and YiaN.

The protein resides in the periplasm. Part of the tripartite ATP-independent periplasmic (TRAP) transport system YiaMNO involved in the uptake of 2,3-diketo-L-gulonate. This protein specifically binds 2,3-diketo-L-gulonate. Is not able to bind either L-ascorbate or dehydroascorbate. In Escherichia coli (strain K12), this protein is 2,3-diketo-L-gulonate-binding periplasmic protein YiaO (yiaO).